The primary structure comprises 207 residues: Outer-membrane lipoprotein carrier protein (207 aa).

An N-terminal signal peptide occupies residues 1-21 (MRLIRMLLLPVLAVTTLSAHA).

It belongs to the LolA family. As to quaternary structure, monomer.

It is found in the periplasm. Functionally, participates in the translocation of lipoproteins from the inner membrane to the outer membrane. Only forms a complex with a lipoprotein if the residue after the N-terminal Cys is not an aspartate (The Asp acts as a targeting signal to indicate that the lipoprotein should stay in the inner membrane). The chain is Outer-membrane lipoprotein carrier protein from Pseudomonas fluorescens (strain ATCC BAA-477 / NRRL B-23932 / Pf-5).